Reading from the N-terminus, the 341-residue chain is tRNA-specific 2-thiouridylase MnmA (341 aa).

ATP-binding positions include G8–S15 and M34. C94 serves as the catalytic Nucleophile. The cysteines at positions 94 and 188 are disulfide-linked. G118 lines the ATP pocket. Residues K136 to Q138 form an interaction with tRNA region. C188 serves as the catalytic Cysteine persulfide intermediate. The interaction with tRNA stretch occupies residues R290–Y291.

This sequence belongs to the MnmA/TRMU family.

The protein localises to the cytoplasm. It catalyses the reaction S-sulfanyl-L-cysteinyl-[protein] + uridine(34) in tRNA + AH2 + ATP = 2-thiouridine(34) in tRNA + L-cysteinyl-[protein] + A + AMP + diphosphate + H(+). Catalyzes the 2-thiolation of uridine at the wobble position (U34) of tRNA, leading to the formation of s(2)U34. This Sulfurimonas denitrificans (strain ATCC 33889 / DSM 1251) (Thiomicrospira denitrificans (strain ATCC 33889 / DSM 1251)) protein is tRNA-specific 2-thiouridylase MnmA.